The chain runs to 105 residues: Gastrin/cholecystokinin-like peptide (105 aa).

The signal sequence occupies residues 1-20 (MKTKVFLGLILSAAVTACLC). Positions 21 to 38 (RPAAKAPGGSHRPTSSLA) are excised as a propeptide. The tract at residues 24–51 (AKAPGGSHRPTSSLARRDWPEPPSQEQQ) is disordered. At tyrosine 87 the chain carries Sulfotyrosine. Phenylalanine 93 is modified (phenylalanine amide). Positions 97 to 105 (STEDAADAA) are excised as a propeptide.

It belongs to the gastrin/cholecystokinin family.

It is found in the secreted. Functionally, potent stimulus of gastric acid, but not of pancreatic secretion. The sequence is that of Gastrin/cholecystokinin-like peptide from Gallus gallus (Chicken).